The following is an 831-amino-acid chain: Periplasmic nitrate reductase (831 aa).

The segment at residues 1–29 is a signal peptide (tat-type signal); the sequence is MKFTRREFMKAQAAASAAAVAGIALPATA. A 4Fe-4S Mo/W bis-MGD-type domain is found at 41 to 97; the sequence is IKWEKAPCRFCGTGCSVLVGTQHGRVVATQGDPESPVNKGLNCVKGYFLSKIMYGKD. 4 residues coordinate [4Fe-4S] cluster: cysteine 48, cysteine 51, cysteine 55, and cysteine 83. Residues lysine 85, glutamine 152, asparagine 177, cysteine 181, 214 to 221, 245 to 249, 264 to 266, methionine 374, glutamine 378, asparagine 484, 510 to 511, lysine 533, aspartate 560, and 720 to 729 each bind Mo-bis(molybdopterin guanine dinucleotide); these read WGSNMAEM, STYTH, QSD, SD, and TGRVLEHWHS. Substrate is bound at residue tryptophan 796. Positions 804 and 821 each coordinate Mo-bis(molybdopterin guanine dinucleotide).

Belongs to the prokaryotic molybdopterin-containing oxidoreductase family. NasA/NapA/NarB subfamily. In terms of assembly, component of the periplasmic nitrate reductase NapAB complex composed of NapA and NapB. It depends on [4Fe-4S] cluster as a cofactor. The cofactor is Mo-bis(molybdopterin guanine dinucleotide). In terms of processing, predicted to be exported by the Tat system. The position of the signal peptide cleavage has not been experimentally proven.

The protein localises to the periplasm. The enzyme catalyses 2 Fe(II)-[cytochrome] + nitrate + 2 H(+) = 2 Fe(III)-[cytochrome] + nitrite + H2O. Functionally, catalytic subunit of the periplasmic nitrate reductase complex NapAB. Receives electrons from NapB and catalyzes the reduction of nitrate to nitrite. This Psychromonas ingrahamii (strain DSM 17664 / CCUG 51855 / 37) protein is Periplasmic nitrate reductase.